The chain runs to 526 residues: Glucose-6-phosphate isomerase (526 aa).

Glu347 functions as the Proton donor in the catalytic mechanism. Active-site residues include His378 and Lys493.

This sequence belongs to the GPI family.

The protein localises to the cytoplasm. The catalysed reaction is alpha-D-glucose 6-phosphate = beta-D-fructose 6-phosphate. The protein operates within carbohydrate biosynthesis; gluconeogenesis. It participates in carbohydrate degradation; glycolysis; D-glyceraldehyde 3-phosphate and glycerone phosphate from D-glucose: step 2/4. Functionally, catalyzes the reversible isomerization of glucose-6-phosphate to fructose-6-phosphate. The polypeptide is Glucose-6-phosphate isomerase (Chlamydia pneumoniae (Chlamydophila pneumoniae)).